Reading from the N-terminus, the 166-residue chain is Large ribosomal subunit protein uL10 (166 aa).

This sequence belongs to the universal ribosomal protein uL10 family. In terms of assembly, part of the ribosomal stalk of the 50S ribosomal subunit. The N-terminus interacts with L11 and the large rRNA to form the base of the stalk. The C-terminus forms an elongated spine to which L12 dimers bind in a sequential fashion forming a multimeric L10(L12)X complex.

Its function is as follows. Forms part of the ribosomal stalk, playing a central role in the interaction of the ribosome with GTP-bound translation factors. This Alkaliphilus metalliredigens (strain QYMF) protein is Large ribosomal subunit protein uL10.